A 116-amino-acid polypeptide reads, in one-letter code: Putative iron-sulfur cluster insertion protein ErpA (116 aa).

Iron-sulfur cluster-binding residues include cysteine 44, cysteine 108, and cysteine 110.

It belongs to the HesB/IscA family. In terms of assembly, homodimer. Iron-sulfur cluster serves as cofactor.

Functionally, required for insertion of 4Fe-4S clusters. This Janthinobacterium sp. (strain Marseille) (Minibacterium massiliensis) protein is Putative iron-sulfur cluster insertion protein ErpA.